Consider the following 331-residue polypeptide: L-lactate dehydrogenase A chain (331 aa).

NAD(+) is bound by residues 29–57 (GMVG…MEDK) and R98. Positions 105, 137, and 168 each coordinate substrate. N137 lines the NAD(+) pocket. H192 (proton acceptor) is an active-site residue. Residue T247 participates in substrate binding.

Belongs to the LDH/MDH superfamily. LDH family. Homotetramer.

The protein resides in the cytoplasm. It carries out the reaction (S)-lactate + NAD(+) = pyruvate + NADH + H(+). It participates in fermentation; pyruvate fermentation to lactate; (S)-lactate from pyruvate: step 1/1. Its function is as follows. Interconverts simultaneously and stereospecifically pyruvate and lactate with concomitant interconversion of NADH and NAD(+). This is L-lactate dehydrogenase A chain (ldha) from Chaenocephalus aceratus (Blackfin icefish).